The primary structure comprises 425 residues: RNA polymerase II-associated factor 1 homolog (425 aa).

Residues 152-174 (KKNQQVEDMYRDKQSQIDAINKT) adopt a coiled-coil conformation. The segment at 331–425 (SRKSKLTLTY…KEPTVDSDSD (95 aa)) is disordered. Basic and acidic residues-rich tracts occupy residues 344–380 (SELE…KEEG) and 393–402 (DKPQKSRSDS).

This sequence belongs to the PAF1 family. In terms of assembly, component of the PAF1 complex which consists of at least cdc-73, ctr-9, leo-1, pafo-1 and rtfo-1.

It is found in the nucleus. Component of the PAF1 complex which is a multifunctional complex involved in transcription initiation via genetic interactions with TATA-binding proteins, elongation and transcription-coupled histone modification. The chain is RNA polymerase II-associated factor 1 homolog from Caenorhabditis elegans.